The primary structure comprises 207 residues: LexA repressor (207 aa).

The H-T-H motif DNA-binding region spans 28 to 48 (RAEISRELGFKSANAAEEHLK). Catalysis depends on for autocatalytic cleavage activity residues Ser123 and Lys160.

This sequence belongs to the peptidase S24 family. As to quaternary structure, homodimer.

It catalyses the reaction Hydrolysis of Ala-|-Gly bond in repressor LexA.. Functionally, represses a number of genes involved in the response to DNA damage (SOS response), including recA and lexA. In the presence of single-stranded DNA, RecA interacts with LexA causing an autocatalytic cleavage which disrupts the DNA-binding part of LexA, leading to derepression of the SOS regulon and eventually DNA repair. The sequence is that of LexA repressor from Haemophilus influenzae (strain ATCC 51907 / DSM 11121 / KW20 / Rd).